A 367-amino-acid chain; its full sequence is SIHRVPLKKGKSLRKQLKDHGLLEDFLKKHPYNPASKYHPVLTATESYEPMTNYMDASYYGTISIGTPQQDFSVIFDTGSSNLWVPSIYCKSSACSNHKRFDPSKSSTYVSTNETVYIAYGTGSMSGILGYDTVAVSSIDVQNQIFGLSETEPGSFFYYCNFDGILGLAFPSISSSGATPVFDNMMSQHLVAQDLFSVYLSKDGETGSFVLFGGIDPNYTTKGIYWVPLSAETYWQITMDRVTVGNKYVACFFTCQAIVDTGTSLLVMPQGAYNRIIKDLGVSSDGEISCDDISKLPDVTFHINGHAFTLPASAYVLNEDGSCMLGFENMGTPTELGEQWILGDVFIREYYVIFDRANNKVGLSPLS.

Positions 1 to 42 (SIHRVPLKKGKSLRKQLKDHGLLEDFLKKHPYNPASKYHPVL) are cleaved as a propeptide — activation peptide. The 306-residue stretch at 59–364 (YYGTISIGTP…DRANNKVGLS (306 aa)) folds into the Peptidase A1 domain. D77 is a catalytic residue. C90 and C95 are disulfide-bonded. A glycan (N-linked (GlcNAc...) asparagine) is linked at N113. A disulfide bridge connects residues C251 and C255. D260 is an active-site residue. C290 and C323 are joined by a disulfide.

It belongs to the peptidase A1 family.

It catalyses the reaction Preferential cleavage: hydrophobic, preferably aromatic, residues in P1 and P1' positions. Cleaves 1-Phe-|-Val-2, 4-Gln-|-His-5, 13-Glu-|-Ala-14, 14-Ala-|-Leu-15, 15-Leu-|-Tyr-16, 16-Tyr-|-Leu-17, 23-Gly-|-Phe-24, 24-Phe-|-Phe-25 and 25-Phe-|-Tyr-26 bonds in the B chain of insulin.. Shows particularly broad specificity; although bonds involving phenylalanine and leucine are preferred, many others are also cleaved to some extent. The chain is Pepsin A (PGA) from Gallus gallus (Chicken).